Here is a 377-residue protein sequence, read N- to C-terminus: 3-dehydroquinate synthase (377 aa).

NAD(+) is bound by residues 115–119 (GVIGD), 139–140 (TS), K152, and K162. E195, H257, and H276 together coordinate Zn(2+).

This sequence belongs to the sugar phosphate cyclases superfamily. Dehydroquinate synthase family. The cofactor is Co(2+). Zn(2+) serves as cofactor. NAD(+) is required as a cofactor.

It localises to the cytoplasm. The enzyme catalyses 7-phospho-2-dehydro-3-deoxy-D-arabino-heptonate = 3-dehydroquinate + phosphate. The protein operates within metabolic intermediate biosynthesis; chorismate biosynthesis; chorismate from D-erythrose 4-phosphate and phosphoenolpyruvate: step 2/7. Catalyzes the conversion of 3-deoxy-D-arabino-heptulosonate 7-phosphate (DAHP) to dehydroquinate (DHQ). The sequence is that of 3-dehydroquinate synthase from Rhizobium etli (strain ATCC 51251 / DSM 11541 / JCM 21823 / NBRC 15573 / CFN 42).